Here is a 579-residue protein sequence, read N- to C-terminus: MVLSEVWTTLSGVSGVCLACSLLSAAVVLRWTGRQKARGAATRARQKQRASLETMDKAVQRFRLQNPDLDSEALLTLPLLQLVQKLQSGELSPEAVFFTYLGKAWEVNKGTNCVTSYLTDCETQLSQAPRQGLLYGVPVSLKECFSYKGHDSTLGLSLNEGMPSESDCVVVQVLKLQGAVPFVHTNVPQSMLSFDCSNPLFGQTMNPWKSSKSPGGSSGGEGALIGSGGSPLGLGTDIGGSIRFPSAFCGICGLKPTGNRLSKSGLKGCVYGQTAVQLSLGPMARDVESLALCLKALLCEHLFTLDPTVPPLPFREEVYRSSRPLRVGYYETDNYTMPSPAMRRALIETKQRLEAAGHTLIPFLPNNIPYALEVLSAGGLFSDGGRSFLQNFKGDFVDPCLGDLILILRLPSWFKRLLSLLLKPLFPRLAAFLNSMRPRSAEKLWKLQHEIEMYRQSVIAQWKAMNLDVLLTPMLGPALDLNTPGRATGAISYTVLYNCLDFPAGVVPVTTVTAEDDAQMELYKGYFGDIWDIILKKAMKNSVGLPVAVQCVALPWQEELCLRFMREVEQLMTPQKQPS.

Residues 9–29 (TLSGVSGVCLACSLLSAAVVL) form a helical membrane-spanning segment. Topologically, residues 30–403 (RWTGRQKARG…GDFVDPCLGD (374 aa)) are cytoplasmic. Lys-142 (charge relay system) is an active-site residue. Residues Met-191, Ser-217, and 238–241 (IGGS) contribute to the substrate site. Ser-217 functions as the Charge relay system in the catalytic mechanism. Ser-241 acts as the Acyl-ester intermediate in catalysis. Ser-241 carries the phosphoserine modification. The stretch at 404 to 433 (LILILRLPSWFKRLLSLLLKPLFPRLAAFL) is an intramembrane region. The Cytoplasmic portion of the chain corresponds to 434-579 (NSMRPRSAEK…QLMTPQKQPS (146 aa)).

It belongs to the amidase family. As to quaternary structure, homodimer. As to expression, found in neuronal cells throughout the CNS. Expressed in liver and brain, and to a lesser extent in spleen, lung, kidney and testes.

The protein resides in the endoplasmic reticulum membrane. It localises to the golgi apparatus membrane. It carries out the reaction N-(5Z,8Z,11Z,14Z-eicosatetraenoyl)-ethanolamine + H2O = ethanolamine + (5Z,8Z,11Z,14Z)-eicosatetraenoate. The catalysed reaction is (9Z)-octadecenamide + H2O = (9Z)-octadecenoate + NH4(+). The enzyme catalyses 2-(5Z,8Z,11Z,14Z-eicosatetraenoyl)-glycerol + H2O = glycerol + (5Z,8Z,11Z,14Z)-eicosatetraenoate + H(+). It catalyses the reaction (9Z,12Z,15Z)-octadecatrienamide + H2O = (9Z,12Z,15Z)-octadecatrienoate + NH4(+). It carries out the reaction (5Z,8Z,11Z,14Z)-eicosatetraenamide + H2O = (5Z,8Z,11Z,14Z)-eicosatetraenoate + NH4(+). The catalysed reaction is (6Z)-octadecenamide + H2O = (6Z)-octadecenoate + NH4(+). The enzyme catalyses (15Z)-tetracosenamide + H2O = (15Z)-tetracosenoate + NH4(+). It catalyses the reaction (8Z,11Z,14Z)-eicosatrienamide + H2O = (8Z,11Z,14Z)-eicosatrienoate + NH4(+). It carries out the reaction (11Z,14Z,17Z)-eicosatrienamide + H2O = (11Z,14Z,17Z)-eicosatrienoate + NH4(+). The catalysed reaction is (11Z,14Z)-eicosadienamide + H2O = (11Z,14Z)-eicosadienoate + NH4(+). The enzyme catalyses (9Z,12Z)-octadecadienamide + H2O = (9Z,12Z)-octadecadienoate + NH4(+). It catalyses the reaction tetradecamide + H2O = tetradecanoate + NH4(+). It carries out the reaction N-(9Z-octadecenoyl) ethanolamine + H2O = ethanolamine + (9Z)-octadecenoate. The catalysed reaction is N-(9Z-octadecenoyl)-taurine + H2O = taurine + (9Z)-octadecenoate. The enzyme catalyses 1-O-methyl-(5Z,8Z,11Z,14Z)-eicosatetraenoate + H2O = methanol + (5Z,8Z,11Z,14Z)-eicosatetraenoate + H(+). It catalyses the reaction (11Z)-eicosenamide + H2O = (11Z)-eicosenoate + NH4(+). It carries out the reaction N-(9Z-hexadecenoyl) ethanolamine + H2O = (9Z)-hexadecenoate + ethanolamine. The catalysed reaction is N-octadecanoyl ethanolamine + H2O = octadecanoate + ethanolamine. The enzyme catalyses N-docosanoyl-ethanolamine + H2O = docosanoate + ethanolamine. It catalyses the reaction N-tetracosanoyl-taurine + H2O = tetracosanoate + taurine. It carries out the reaction N-(15Z-tetracosenoyl)-ethanolamine + H2O = (15Z)-tetracosenoate + ethanolamine. The catalysed reaction is N-docosanoyl-taurine + H2O = docosanoate + taurine. The enzyme catalyses N-(15Z-tetracosenoyl)-taurine + H2O = (15Z)-tetracosenoate + taurine. It catalyses the reaction N-tricosanoyl-taurine + H2O = tricosanoate + taurine. It carries out the reaction (9Z)-octadecenoate + glycine = N-(9Z-octadecenoyl)glycine + H2O. The catalysed reaction is N-(5Z,8Z,11Z,14Z)-eicosatetraenoyl-glycine + H2O = (5Z,8Z,11Z,14Z)-eicosatetraenoate + glycine. The enzyme catalyses N-(5Z,8Z,11Z,14Z-eicosatetraenoyl)-L-serine + H2O = (5Z,8Z,11Z,14Z)-eicosatetraenoate + L-serine. Inhibited by trifluoromethyl ketone. Functionally, catalyzes the hydrolysis of endogenous amidated lipids like the sleep-inducing lipid oleamide ((9Z)-octadecenamide), the endocannabinoid anandamide (N-(5Z,8Z,11Z,14Z-eicosatetraenoyl)-ethanolamine), as well as other fatty amides, to their corresponding fatty acids, thereby regulating the signaling functions of these molecules. Hydrolyzes polyunsaturated substrate anandamide preferentially as compared to monounsaturated substrates. It can also catalyze the hydrolysis of the endocannabinoid 2-arachidonoylglycerol (2-(5Z,8Z,11Z,14Z-eicosatetraenoyl)-glycerol). FAAH cooperates with PM20D1 in the hydrolysis of amino acid-conjugated fatty acids such as N-fatty acyl glycine and N-fatty acyl-L-serine, thereby acting as a physiological regulator of specific subsets of intracellular, but not of extracellular, N-fatty acyl amino acids. The sequence is that of Fatty-acid amide hydrolase 1 (Faah) from Rattus norvegicus (Rat).